Here is a 422-residue protein sequence, read N- to C-terminus: tRNA hydroxylation protein P (422 aa).

A signal peptide spans 1–58 (MNQVELLSPAGNLKKLKIALNYGADAVYGGVSHFSLRNRAGKEFTLETFKEGIDYAHA).

This sequence belongs to the peptidase U32 family.

Functionally, involved in prephenate-dependent formation of 5-hydroxyuridine (ho5U) modification at position 34 in tRNAs, the first step in 5-carboxymethoxyuridine (cmo5U) biosynthesis. The polypeptide is tRNA hydroxylation protein P (Helicobacter pylori (strain ATCC 700392 / 26695) (Campylobacter pylori)).